Consider the following 409-residue polypeptide: Cuticle-degrading serine protease (409 aa).

The first 21 residues, 1–21 (MLTNGLISLLAIAGLATNAFA), serve as a signal peptide directing secretion. The propeptide occupies 22–123 (GPIRKVSNAG…VEQDTVVTTY (102 aa)). The Inhibitor I9 domain occupies 39–122 (KYIVVLKKGL…YVEQDTVVTT (84 aa)). The 280-residue stretch at 130 to 409 (TWGLDRISHE…PNKIAYNGYA (280 aa)) folds into the Peptidase S8 domain. Asp-164 functions as the Charge relay system in the catalytic mechanism. An N-linked (GlcNAc...) asparagine glycan is attached at Asn-178. Residue His-200 is the Charge relay system of the active site. N-linked (GlcNAc...) asparagine glycosylation is present at Asn-252. The active-site Charge relay system is Ser-353.

The protein belongs to the peptidase S8 family.

It is found in the secreted. Inhibited by PMSF, SSI, the peptide Phe-Val and by Phe, but not by EDTA. Hydrolyzes gelatin, casein, the chromogenic substrate azocoll and the cuticle of the nematode P.redivivus. Immobilizes P.redivivus. This chain is Cuticle-degrading serine protease, found in Arthrobotrys oligospora (strain ATCC 24927 / CBS 115.81 / DSM 1491) (Nematode-trapping fungus).